A 271-amino-acid polypeptide reads, in one-letter code: 3-methyl-2-oxobutanoate hydroxymethyltransferase (271 aa).

Positions 42 and 86 each coordinate Mg(2+). 3-methyl-2-oxobutanoate contacts are provided by residues 42 to 43 (DS), Asp-86, and Lys-116. Mg(2+) is bound at residue Glu-118. The active-site Proton acceptor is Glu-185.

This sequence belongs to the PanB family. In terms of assembly, homodecamer; pentamer of dimers. The cofactor is Mg(2+).

It is found in the cytoplasm. The catalysed reaction is 3-methyl-2-oxobutanoate + (6R)-5,10-methylene-5,6,7,8-tetrahydrofolate + H2O = 2-dehydropantoate + (6S)-5,6,7,8-tetrahydrofolate. Its pathway is cofactor biosynthesis; (R)-pantothenate biosynthesis; (R)-pantoate from 3-methyl-2-oxobutanoate: step 1/2. Its function is as follows. Catalyzes the reversible reaction in which hydroxymethyl group from 5,10-methylenetetrahydrofolate is transferred onto alpha-ketoisovalerate to form ketopantoate. In Synechococcus sp. (strain CC9605), this protein is 3-methyl-2-oxobutanoate hydroxymethyltransferase.